A 306-amino-acid chain; its full sequence is Ribosomal protein L11 methyltransferase (306 aa).

The S-adenosyl-L-methionine site is built by Thr-154, Gly-179, Asp-201, and Asn-242.

The protein belongs to the methyltransferase superfamily. PrmA family.

It localises to the cytoplasm. It catalyses the reaction L-lysyl-[protein] + 3 S-adenosyl-L-methionine = N(6),N(6),N(6)-trimethyl-L-lysyl-[protein] + 3 S-adenosyl-L-homocysteine + 3 H(+). In terms of biological role, methylates ribosomal protein L11. The protein is Ribosomal protein L11 methyltransferase of Xanthomonas axonopodis pv. citri (strain 306).